Here is a 101-residue protein sequence, read N- to C-terminus: MKILVKIRLTRVGTHKKPFFRIVVMDAKTKANGAYIENLGHYDPVLGQVVLKKEAILAQLQNGAQPSETVKNILSQEGIWKEFIALKDANKKRKAALSKAK.

Belongs to the bacterial ribosomal protein bS16 family.

The sequence is that of Small ribosomal subunit protein bS16 from Ureaplasma parvum serovar 3 (strain ATCC 700970).